The primary structure comprises 365 residues: DNA replication and repair protein RecF (365 aa).

30-37 is an ATP binding site; it reads GDNGEGKT.

This sequence belongs to the RecF family.

The protein resides in the cytoplasm. The RecF protein is involved in DNA metabolism; it is required for DNA replication and normal SOS inducibility. RecF binds preferentially to single-stranded, linear DNA. It also seems to bind ATP. In Leptospira interrogans serogroup Icterohaemorrhagiae serovar copenhageni (strain Fiocruz L1-130), this protein is DNA replication and repair protein RecF.